The chain runs to 576 residues: Cyclic nucleotide-binding domain-containing protein 2 (576 aa).

S116–R239 contributes to the a nucleoside 3',5'-cyclic phosphate binding site.

The protein resides in the cytoplasm. Its subcellular location is the cytosol. Functionally, essential for male fertility. Plays an important role in spermatogenesis and regulates sperm motility by controlling the development of the flagellar bending of sperm. The chain is Cyclic nucleotide-binding domain-containing protein 2 (CNBD2) from Homo sapiens (Human).